Consider the following 189-residue polypeptide: UPF0301 protein PA14_05290 (189 aa).

This sequence belongs to the UPF0301 (AlgH) family.

The protein is UPF0301 protein PA14_05290 of Pseudomonas aeruginosa (strain UCBPP-PA14).